Reading from the N-terminus, the 37-residue chain is Large ribosomal subunit protein bL36 (37 aa).

This sequence belongs to the bacterial ribosomal protein bL36 family.

The polypeptide is Large ribosomal subunit protein bL36 (Syntrophotalea carbinolica (strain DSM 2380 / NBRC 103641 / GraBd1) (Pelobacter carbinolicus)).